Consider the following 762-residue polypeptide: Probable disease resistance protein At1g61300 (762 aa).

A lipid anchor (N-myristoyl glycine) is attached at Gly-2. Residues Cys-3 and Cys-4 are each lipidated (S-palmitoyl cysteine). The region spanning 26 to 329 is the NB-ARC domain; the sequence is NINRNSFGVE…CEGFIGEDQV (304 aa). ATP is bound at residue 68-75; that stretch reads GMGGVGKT. LRR repeat units follow at residues 401-422, 423-444, 447-470, 471-493, and 494-516; these read AVRRMSLMDNHIEEITCESKCS, ELTTLFLQSNQLKNLSGEFIRY, KLVVLDLSYNRDFNKLPEQISGLV, SLQFLDLSNTSIKQLPVGLKKLK, and KLTFLNLAYTVRLCSISGISRLL.

It belongs to the disease resistance NB-LRR family.

The protein resides in the cell membrane. In terms of biological role, probable disease resistance protein. The protein is Probable disease resistance protein At1g61300 of Arabidopsis thaliana (Mouse-ear cress).